The chain runs to 158 residues: Transcription elongation factor GreA (158 aa).

Belongs to the GreA/GreB family.

Functionally, necessary for efficient RNA polymerase transcription elongation past template-encoded arresting sites. The arresting sites in DNA have the property of trapping a certain fraction of elongating RNA polymerases that pass through, resulting in locked ternary complexes. Cleavage of the nascent transcript by cleavage factors such as GreA or GreB allows the resumption of elongation from the new 3'terminus. GreA releases sequences of 2 to 3 nucleotides. This Psychrobacter sp. (strain PRwf-1) protein is Transcription elongation factor GreA.